A 278-amino-acid chain; its full sequence is TIMELESS-interacting protein (278 aa).

Residues 1–59 (MLEQEENGLFEIPDYEHVEDETFPPFPPPASPERDPADAEPEEGSGSGVPVPPKRTVKR) form a disordered region. Positions 64–140 (LDATRLTSER…KEVQTCLKRI (77 aa)) are interaction with TIMELESS. 2 disordered regions span residues 155-197 (NDEV…EEQQ) and 216-278 (LSNS…TNLD). Phosphoserine occurs at positions 191 and 219. Over residues 226–239 (VTVEENSTGEDQEE) the composition is skewed to acidic residues. A Phosphothreonine modification is found at Thr-233. Over residues 259–278 (THEEEQCKAEETQLDHTNLD) the composition is skewed to basic and acidic residues.

This sequence belongs to the CSM3 family. As to quaternary structure, interacts with MCM6 and MCM7. Interacts with TIMELESS (via N-terminus), which impairs TIMELESS self-association. Interacts with RPA2 and PRDX2. As to expression, expressed in brain.

Its subcellular location is the cytoplasm. It localises to the nucleus. In terms of biological role, plays an important role in the control of DNA replication and the maintenance of replication fork stability. Important for cell survival after DNA damage or replication stress. May be specifically required for the ATR-CHEK1 pathway in the replication checkpoint induced by hydroxyurea or ultraviolet light. Forms a complex with TIMELESS and this complex regulates DNA replication processes under both normal and stress conditions, stabilizes replication forks and influences both CHEK1 phosphorylation and the intra-S phase checkpoint in response to genotoxic stress. The polypeptide is TIMELESS-interacting protein (Tipin) (Mus musculus (Mouse)).